Consider the following 147-residue polypeptide: MASKLNEEAQSEFKEGFALYDGNKDGKLEAAELANTLRWLGQNPSQSEINEILREFGSNNQMGVDGLFNYLGRKVVDDFDEKEIIEAFQVFDKDGKGMIGASDLRHILTNLGERLPEEQVEEMLRQAVGSGDGAINYEPFVRNMLKK.

3 EF-hand domains span residues 8 to 43 (EAQS…LGQN), 79 to 114 (FDEK…LGER), and 115 to 147 (LPEE…MLKK). Ca(2+) is bound by residues Asp21, Asn23, Asp25, Lys27, and Glu32.

As to quaternary structure, myosin I is a dimer of a heavy and a light chain. Inability to self-assemble into filaments. Interacts with myoD. Does not interact with myoB or myoC.

It localises to the cytoplasm. Its function is as follows. Functions as the light chain for myosin-D. Has low affinity for calcium. The protein is Myosin-ID light chain (mlcD) of Dictyostelium discoideum (Social amoeba).